A 300-amino-acid chain; its full sequence is Ribonuclease HIII (300 aa).

The RNase H type-2 domain maps to 83–300; the sequence is IPIIGSDEVG…THKAQALLTK (218 aa). Positions 89, 90, and 194 each coordinate a divalent metal cation.

It belongs to the RNase HII family. RnhC subfamily. Mn(2+) is required as a cofactor. It depends on Mg(2+) as a cofactor.

The protein resides in the cytoplasm. It catalyses the reaction Endonucleolytic cleavage to 5'-phosphomonoester.. Endonuclease that specifically degrades the RNA of RNA-DNA hybrids. This is Ribonuclease HIII from Streptococcus pyogenes serotype M4 (strain MGAS10750).